The following is a 260-amino-acid chain: Carbonic anhydrase 2 (260 aa).

The residue at position 2 (serine 2) is an N-acetylserine. Residue serine 2 is modified to Phosphoserine. Residues 3–259 (HHWGYSKHNG…LKNRKIKASF (257 aa)) enclose the Alpha-carbonic anhydrase domain. Histidine 64 functions as the Proton acceptor in the catalytic mechanism. Asparagine 67 is an active-site residue. Serine 87 carries the post-translational modification Phosphoserine. The Zn(2+) site is built by histidine 94, histidine 96, and histidine 119. Tyrosine 127 is a catalytic residue. Serine 165 carries the phosphoserine modification. Position 198-199 (198-199 (TT)) interacts with substrate.

This sequence belongs to the alpha-carbonic anhydrase family. Interacts with SLC4A4. Interaction with SLC4A7 regulates SLC4A7 transporter activity. Interacts with SLC26A6. Zn(2+) is required as a cofactor.

The protein resides in the cytoplasm. The protein localises to the cell membrane. It carries out the reaction hydrogencarbonate + H(+) = CO2 + H2O. The enzyme catalyses urea = cyanamide + H2O. Inhibited by acetazolamide. Its function is as follows. Catalyzes the reversible hydration of carbon dioxide. Can also hydrate cyanamide to urea. Involved in the regulation of fluid secretion into the anterior chamber of the eye. Essential for bone resorption and osteoclast differentiation. Contributes to intracellular pH regulation in the duodenal upper villous epithelium during proton-coupled peptide absorption. Stimulates the chloride-bicarbonate exchange activity of SLC26A6. This Mus musculus (Mouse) protein is Carbonic anhydrase 2 (Ca2).